A 55-amino-acid polypeptide reads, in one-letter code: Photosystem II reaction center protein K (55 aa).

Positions Met-1–Ala-18 are excised as a propeptide. Residues Ile-26–Phe-46 form a helical membrane-spanning segment.

Belongs to the PsbK family. PSII is composed of 1 copy each of membrane proteins PsbA, PsbB, PsbC, PsbD, PsbE, PsbF, PsbH, PsbI, PsbJ, PsbK, PsbL, PsbM, PsbT, PsbX, PsbY, PsbZ, Psb30/Ycf12, at least 3 peripheral proteins of the oxygen-evolving complex and a large number of cofactors. It forms dimeric complexes.

It localises to the plastid. The protein resides in the chloroplast thylakoid membrane. Functionally, one of the components of the core complex of photosystem II (PSII). PSII is a light-driven water:plastoquinone oxidoreductase that uses light energy to abstract electrons from H(2)O, generating O(2) and a proton gradient subsequently used for ATP formation. It consists of a core antenna complex that captures photons, and an electron transfer chain that converts photonic excitation into a charge separation. The polypeptide is Photosystem II reaction center protein K (Marchantia polymorpha (Common liverwort)).